The primary structure comprises 748 residues: 5-methyltetrahydropteroyltriglutamate--homocysteine methyltransferase (748 aa).

K111 is a binding site for 5-methyltetrahydropteroyltri-L-glutamate. L-homocysteine contacts are provided by residues 428-430 (IGS) and E478. Residues 428–430 (IGS) and E478 each bind L-methionine. Residues 509–510 (RC) and W555 each bind 5-methyltetrahydropteroyltri-L-glutamate. Residue D593 coordinates L-homocysteine. D593 contributes to the L-methionine binding site. A 5-methyltetrahydropteroyltri-L-glutamate-binding site is contributed by E599. Zn(2+) is bound by residues H635, C637, and E659. H687 acts as the Proton donor in catalysis. C719 contacts Zn(2+).

Belongs to the vitamin-B12 independent methionine synthase family. Zn(2+) serves as cofactor.

It carries out the reaction 5-methyltetrahydropteroyltri-L-glutamate + L-homocysteine = tetrahydropteroyltri-L-glutamate + L-methionine. Its pathway is amino-acid biosynthesis; L-methionine biosynthesis via de novo pathway; L-methionine from L-homocysteine (MetE route): step 1/1. In terms of biological role, catalyzes the transfer of a methyl group from 5-methyltetrahydrofolate to homocysteine resulting in methionine formation. This is 5-methyltetrahydropteroyltriglutamate--homocysteine methyltransferase from Herpetosiphon aurantiacus (strain ATCC 23779 / DSM 785 / 114-95).